A 318-amino-acid polypeptide reads, in one-letter code: ZAR1-like protein (318 aa).

Positions 149–211 (LSDPPEAGQP…PVDSSQPLGR (63 aa)) are disordered. Pro residues predominate over residues 155-169 (AGQPPPPLPPPSPPP). The 3CxxC-type zinc-finger motif lies at 219 to 304 (PKYGYFHCKD…QELCGRCKDK (86 aa)).

Belongs to the ZAR1 family. In terms of assembly, interacts with YBX2.

Its subcellular location is the cytoplasm. It localises to the cytoplasmic ribonucleoprotein granule. In terms of biological role, mRNA-binding protein required for maternal mRNA storage, translation and degradation during oocyte maturation. Probably promotes formation of some phase-separated membraneless compartment that stores maternal mRNAs in oocytes: acts by undergoing liquid-liquid phase separation upon binding to maternal mRNAs. Binds to the 3'-UTR of maternal mRNAs, inhibiting their translation. This chain is ZAR1-like protein (ZAR1L), found in Bos taurus (Bovine).